We begin with the raw amino-acid sequence, 863 residues long: Axin-1 (863 aa).

Positions 1–81 (MNVQEQGFPL…PEGSASPTPP (81 aa)) are disordered. The Tankyrase-binding motif motif lies at 20–29 (APRPPVPGEE). Polar residues predominate over residues 34–61 (STDSRPVNHSFCSGKGTSIKSETSTATP). The residue at position 75 (Ser-75) is a Phosphoserine. Phosphoserine; by CK1 is present on Ser-77. An RGS domain is found at 88 to 211 (SLHSLLDDQD…LKSDIYLEYT (124 aa)). An interaction with TP53 region spans residues 209–338 (EYTRTGSESP…DADTLSLTDS (130 aa)). Disordered regions lie at residues 215-240 (SESP…YLPT), 249-268 (CDQD…SRLT), and 315-344 (ATSA…DGIP). Ser-217 is subject to Phosphoserine. Acidic residues predominate over residues 249–258 (CDQDADEDDG). A compositionally biased stretch (low complexity) spans 325-339 (SLSSDADTLSLTDSS). The interval 348–432 (IRKQHRREMQ…EDGEMPSGPM (85 aa)) is interaction with GSK3B. The segment at 353 to 411 (RREMQESIQVNGRVPLPHIPRTYRMPKEIRVEPQKFAEELIHRLEAVQRTREAEEKLEE) is interaction with SIAH1. Residues 433–501 (ASHKLPSVPA…SPDSGHVAKT (69 aa)) are interaction with beta-catenin. Ser-468 carries the post-translational modification Phosphoserine; by CK1. A Phosphothreonine; by GSK3-beta modification is found at Thr-480. Ser-485 bears the Phosphoserine; by GSK3-beta mark. 2 positions are modified to phosphoserine: Ser-492 and Ser-509. The interval 505 to 758 (GGTASGHGKH…PVLSVVPAVS (254 aa)) is interaction with RNF111. Residues 529–542 (HHRHVHHHVHHNSA) are compositionally biased toward basic residues. Disordered stretches follow at residues 529–624 (HHRH…DAEK) and 642–664 (HRKA…SRPL). Positions 543-554 (RPKEQMEAEVAR) are enriched in basic and acidic residues. Residues 572-790 (PRSYSENAGT…CDSIVVAYYF (219 aa)) are interaction with PPP2CA. Over residues 575 to 584 (YSENAGTTLS) the composition is skewed to polar residues. The segment at 678-753 (AQLRNSVQPS…RPACAPVLSV (76 aa)) is interaction with HIPK2. Residues 781-863 (CDSIVVAYYF…KIIGKVEKVD (83 aa)) form the DIX domain. Glycyl lysine isopeptide (Lys-Gly) (interchain with G-Cter in SUMO) cross-links involve residues Lys-858 and Lys-861.

In terms of assembly, homodimer. Component of the beta-catenin destruction complex, containing at least CTNNB1, an axin and GSK3B, that regulates CTNNB1 protein levels through phosphorylation and ubiquitination. Interacts with GSK3B; the interaction hyperphosphorylates CTNNB1 leading to its ubiquitination and destruction. Interacts with DAXX; the interaction stimulates the interaction of DAXX with TP53, stimulates 'Ser-46' phosphorylation of TP53 and induces cell death on UV irradiation. Also interacts with APC, RNF111, SMAD6 and SMAD7. Interacts (via the C-terminal) with PPP1CA; the interaction dephosphorylates AXIN1 and regulates interaction with GSK3B. Interacts with PPP2CA; the interaction dephosphorylates AXIN1. Interacts with MDFI; the interaction decreases AXIN1-mediated JUN N-terminal kinase (JNK) activation. Interacts with MDFIC; the interaction inhibits beta-cateninin-mediated signaling and AXIN1-mediated JUN N-terminal kinase (JNK) activation. Binds ANKRD6, PIAS1, PIAS2, PIAS4, SUMO1, MAP3K1 and MAP3K4. Component of the AXIN1-HIPK2-TP53 complex. Interacts directly in the complex with TP53 and HIPK2. Interacts with DIXDC1; the interaction prevents interaction with MAP3K1. Interacts with AIDA; the interaction blocks the AXIN1-mediated JNK activation through disrupting AXIN1 homodimerization and Wnt signaling. Interacts with LRP5 (via its phosphorylated PPPSP motifs); the interaction is stimulated by WNT1 and GSK3B and activates beta-catenin signaling. Interacts with CTNNB1 (via the armadillo repeats 2-7). Interacts with MACF1. Found in a complex composed of MACF1, APC, AXIN1, CTNNB1 and GSK3B. Interacts with TNKS. Interacts with DAB2; the interaction is mutually exclusive with the AXIN1:PPP1CA interaction. Interacts with ZBED3 (via PPPSP motif); the interaction is direct, enhanced by protein kinase GSK3B and casein kinase CSNK1E activities and decreases GSK3B-induced beta-catenin serine and threonine phosphorylations. Interacts with WDR26. Interacts with GID8. Interacts with SIAH1 and SIAH2; both probably catalyze AXIN1 ubiquitination and subsequent proteasome-mediated ubiquitin-dependent degradation. Interaction with GSK3B and AXIN1 is competitive. In terms of processing, phosphorylation and dephosphorylation of AXIN1 regulates assembly and function of the beta-catenin complex. Phosphorylated by CK1 and GSK3B. Dephosphorylated by PPP1CA and PPP2CA. Phosphorylation by CK1 enhances binding of GSK3B to AXIN1. Also phosphorylated by CDK2 which regulates interaction with CTNBB1. Post-translationally, ADP-ribosylated by tankyrase TNKS and TNKS2. Poly-ADP-ribosylated protein is recognized by RNF146, followed by ubiquitination and subsequent activation of the Wnt signaling pathway. Ubiquitinated by RNF146 when poly-ADP-ribosylated, leading to its degradation and subsequent activation of the Wnt signaling pathway. Deubiquitinated by USP34, deubiquitinated downstream of beta-catenin stabilization step: deubiquitination is important for nuclear accumulation during Wnt signaling to positively regulate beta-catenin (CTNBB1)-mediated transcription. Sumoylation at Lys-858 and Lys-861 prevents ubiquitination and degradation. Sumoylation is required for AXIN1-mediated JNK activation. Ubiquitination by SIAH1 and SIAH2 induces its proteasomal degradation as part of the activation of the Wnt signaling pathway. In terms of tissue distribution, expressed in embryonic stem cells.

The protein localises to the cytoplasm. The protein resides in the nucleus. It is found in the cell membrane. Its subcellular location is the membrane. Functionally, component of the beta-catenin destruction complex required for regulating CTNNB1 levels through phosphorylation and ubiquitination, and modulating Wnt-signaling. Controls dorsoventral patterning via two opposing effects; down-regulates CTNNB1 to inhibit the Wnt signaling pathway and ventralize embryos, but also dorsalizes embryos by activating a Wnt-independent JNK signaling pathway. In Wnt signaling, probably facilitates the phosphorylation of CTNNB1 and APC by GSK3B. Likely to function as a tumor suppressor. Facilitates the phosphorylation of TP53 by HIPK2 upon ultraviolet irradiation. Enhances TGF-beta signaling by recruiting the RNF111 E3 ubiquitin ligase and promoting the degradation of inhibitory SMAD7. Also a component of the AXIN1-HIPK2-TP53 complex which controls cell growth, apoptosis and development. The sequence is that of Axin-1 (Axin1) from Mus musculus (Mouse).